Consider the following 185-residue polypeptide: Ribosome-recycling factor (185 aa).

Residues 137–162 (DSIDKMVKDGEVGEDEGRRAEKELDD) are disordered.

The protein belongs to the RRF family.

It is found in the cytoplasm. Responsible for the release of ribosomes from messenger RNA at the termination of protein biosynthesis. May increase the efficiency of translation by recycling ribosomes from one round of translation to another. This chain is Ribosome-recycling factor, found in Streptomyces coelicolor (strain ATCC BAA-471 / A3(2) / M145).